A 567-amino-acid chain; its full sequence is Arginine--tRNA ligase (567 aa).

Residues Ala121–His131 carry the 'HIGH' region motif.

It belongs to the class-I aminoacyl-tRNA synthetase family.

Its subcellular location is the cytoplasm. It catalyses the reaction tRNA(Arg) + L-arginine + ATP = L-arginyl-tRNA(Arg) + AMP + diphosphate. The sequence is that of Arginine--tRNA ligase from Methanococcoides burtonii (strain DSM 6242 / NBRC 107633 / OCM 468 / ACE-M).